Reading from the N-terminus, the 238-residue chain is 1-(5-phosphoribosyl)-5-[(5-phosphoribosylamino)methylideneamino] imidazole-4-carboxamide isomerase (238 aa).

The active-site Proton acceptor is the Asp-8. Asp-129 serves as the catalytic Proton donor.

It belongs to the HisA/HisF family.

It localises to the cytoplasm. It carries out the reaction 1-(5-phospho-beta-D-ribosyl)-5-[(5-phospho-beta-D-ribosylamino)methylideneamino]imidazole-4-carboxamide = 5-[(5-phospho-1-deoxy-D-ribulos-1-ylimino)methylamino]-1-(5-phospho-beta-D-ribosyl)imidazole-4-carboxamide. The protein operates within amino-acid biosynthesis; L-histidine biosynthesis; L-histidine from 5-phospho-alpha-D-ribose 1-diphosphate: step 4/9. The sequence is that of 1-(5-phosphoribosyl)-5-[(5-phosphoribosylamino)methylideneamino] imidazole-4-carboxamide isomerase from Lacticaseibacillus paracasei (strain ATCC 334 / BCRC 17002 / CCUG 31169 / CIP 107868 / KCTC 3260 / NRRL B-441) (Lactobacillus paracasei).